Reading from the N-terminus, the 330-residue chain is Acrylyl-CoA reductase AcuI (330 aa).

Residues Tyr-44, 159-162 (AGGV), 181-183 (TGR), Arg-201, Leu-247, and Ser-272 contribute to the NADP(+) site.

Belongs to the zinc-containing alcohol dehydrogenase family. Acrylyl-CoA reductase subfamily. Homodimer.

The protein resides in the cytoplasm. The enzyme catalyses propanoyl-CoA + NADP(+) = acryloyl-CoA + NADPH + H(+). Functionally, probably catalyzes the NADPH-dependent reduction of acrylyl-CoA to propanoyl-CoA. Restores acrylate resistance when expressed in an E.coli strain K12 acuI deletion. This chain is Acrylyl-CoA reductase AcuI (acuI), found in Ruegeria pomeroyi (strain ATCC 700808 / DSM 15171 / DSS-3) (Silicibacter pomeroyi).